The primary structure comprises 768 residues: Ribosomal RNA large subunit methyltransferase K/L (768 aa).

A THUMP domain is found at aspartate 60–leucine 175.

The protein belongs to the methyltransferase superfamily. RlmKL family.

It is found in the cytoplasm. It catalyses the reaction guanosine(2445) in 23S rRNA + S-adenosyl-L-methionine = N(2)-methylguanosine(2445) in 23S rRNA + S-adenosyl-L-homocysteine + H(+). The catalysed reaction is guanosine(2069) in 23S rRNA + S-adenosyl-L-methionine = N(2)-methylguanosine(2069) in 23S rRNA + S-adenosyl-L-homocysteine + H(+). Specifically methylates the guanine in position 2445 (m2G2445) and the guanine in position 2069 (m7G2069) of 23S rRNA. In Psychrobacter arcticus (strain DSM 17307 / VKM B-2377 / 273-4), this protein is Ribosomal RNA large subunit methyltransferase K/L.